Reading from the N-terminus, the 218-residue chain is Small ribosomal subunit protein uS3 (218 aa).

A KH type-2 domain is found at 38–106 (IREFISKRLS…RVHINILEIK (69 aa)).

This sequence belongs to the universal ribosomal protein uS3 family. As to quaternary structure, part of the 30S ribosomal subunit. Forms a tight complex with proteins S10 and S14.

Functionally, binds the lower part of the 30S subunit head. Binds mRNA in the 70S ribosome, positioning it for translation. The protein is Small ribosomal subunit protein uS3 of Bacillus velezensis (strain DSM 23117 / BGSC 10A6 / LMG 26770 / FZB42) (Bacillus amyloliquefaciens subsp. plantarum).